The chain runs to 491 residues: ATP synthase subunit beta, chloroplastic (491 aa).

Position 172-179 (172-179) interacts with ATP; the sequence is GGAGVGKT.

This sequence belongs to the ATPase alpha/beta chains family. F-type ATPases have 2 components, CF(1) - the catalytic core - and CF(0) - the membrane proton channel. CF(1) has five subunits: alpha(3), beta(3), gamma(1), delta(1), epsilon(1). CF(0) has four main subunits: a(1), b(1), b'(1) and c(9-12).

The protein resides in the plastid. The protein localises to the chloroplast thylakoid membrane. The enzyme catalyses ATP + H2O + 4 H(+)(in) = ADP + phosphate + 5 H(+)(out). Produces ATP from ADP in the presence of a proton gradient across the membrane. The catalytic sites are hosted primarily by the beta subunits. In Pisum sativum (Garden pea), this protein is ATP synthase subunit beta, chloroplastic.